Reading from the N-terminus, the 142-residue chain is Small ribosomal subunit protein uS12 (142 aa).

The protein belongs to the universal ribosomal protein uS12 family. Part of the 30S ribosomal subunit.

Its function is as follows. With S4 and S5 plays an important role in translational accuracy. Located at the interface of the 30S and 50S subunits. This Methanospirillum hungatei JF-1 (strain ATCC 27890 / DSM 864 / NBRC 100397 / JF-1) protein is Small ribosomal subunit protein uS12.